The chain runs to 467 residues: Glutamyl-tRNA(Gln) amidotransferase subunit A (467 aa).

Active-site charge relay system residues include K57 and S132. S156 serves as the catalytic Acyl-ester intermediate.

The protein belongs to the amidase family. GatA subfamily. Heterotrimer of A, B and C subunits.

It carries out the reaction L-glutamyl-tRNA(Gln) + L-glutamine + ATP + H2O = L-glutaminyl-tRNA(Gln) + L-glutamate + ADP + phosphate + H(+). In terms of biological role, allows the formation of correctly charged Gln-tRNA(Gln) through the transamidation of misacylated Glu-tRNA(Gln) in organisms which lack glutaminyl-tRNA synthetase. The reaction takes place in the presence of glutamine and ATP through an activated gamma-phospho-Glu-tRNA(Gln). The sequence is that of Glutamyl-tRNA(Gln) amidotransferase subunit A from Pseudothermotoga lettingae (strain ATCC BAA-301 / DSM 14385 / NBRC 107922 / TMO) (Thermotoga lettingae).